The sequence spans 276 residues: Small ribosomal subunit protein uS5w (276 aa).

Basic and acidic residues predominate over residues 1-15 (MAERGVERGGDRGDF). The disordered stretch occupies residues 1–42 (MAERGVERGGDRGDFGRGFGGRGGGRGGPRGRGRRAGRAPEE). Residues 16-28 (GRGFGGRGGGRGG) show a composition bias toward gly residues. An S5 DRBM domain is found at 87 to 150 (LKDEVMKIMP…ILAKLSVVPI (64 aa)).

This sequence belongs to the universal ribosomal protein uS5 family.

In Arabidopsis thaliana (Mouse-ear cress), this protein is Small ribosomal subunit protein uS5w (RPS2D).